The chain runs to 509 residues: Cation transporter HKT2;4 (509 aa).

At 1-32 the chain is on the cytoplasmic side; sequence MPIRLHIFVSSARHAINSSALICRFIAFHLSP. 2 helical membrane-spanning segments follow: residues 33–53 and 96–116; these read LLIH…ALVV and VLTL…GLVL. Residues 117 to 164 lie on the Cytoplasmic side of the membrane; sequence ESSKQNKHDPENRRVSSVTVCEQSHLEEAIPQTPSMNSTDIKRSCHKY. 2 consecutive transmembrane segments (helical) span residues 165 to 185 and 237 to 257; these read LVFV…LLVF and GLLL…PMFL. The Cytoplasmic segment spans residues 258-296; sequence RLVIWALRGLRLAKAEEPDFMMNNSSSVGFSHLLPNLQT. Transmembrane regions (helical) follow at residues 297-317 and 353-373; these read IFLA…FCCL and CSLV…TPSL. The Cytoplasmic portion of the chain corresponds to 374–400; the sequence is TKLFSACQDHKQIGPESDDRTSKGKPF. The next 2 membrane-spanning stretches (helical) occupy residues 401-421 and 476-496; these read LKTM…LVCI and SFSG…MLYG. Topologically, residues 497–509 are cytoplasmic; that stretch reads RLNSKDSTSARTR.

The protein belongs to the TrkH potassium transport family. HKT (TC 2.A.38.3) subfamily. In terms of tissue distribution, expressed in spikelets, leaf blades, leaf sheaths, internodes, nodes, the base of stems and roots.

Its subcellular location is the cell membrane. The catalysed reaction is K(+)(in) = K(+)(out). It catalyses the reaction Mg(2+)(in) = Mg(2+)(out). It carries out the reaction Ca(2+)(in) = Ca(2+)(out). High-affinity potassium transporter that does not show potassium-sodium cotransport. Potassium transport seems to be independent of sodium. Mediates transport of the divalent cations magnesium and calcium in the absence of competing potassium ions. Selectivity for potassium is dominant over divalent cations, and magnesium and calcium transport may be small and may depend on competing potassium concentrations. The sequence is that of Cation transporter HKT2;4 from Oryza sativa subsp. japonica (Rice).